A 349-amino-acid polypeptide reads, in one-letter code: Ion-translocating oxidoreductase complex subunit D (349 aa).

3 helical membrane passes run 37-57, 73-90, and 124-144; these read AFFG…ALSA, LSDN…VAIP, and AMAA…TWIA. T185 carries the post-translational modification FMN phosphoryl threonine. The next 5 membrane-spanning stretches (helical) occupy residues 212-232, 239-259, 265-285, 291-311, and 315-335; these read ATGV…LVLL, WHIS…GFLL, GSPL…FIAT, ATSP…VYII, and GGYP…APFI.

Belongs to the NqrB/RnfD family. The complex is composed of six subunits: RnfA, RnfB, RnfC, RnfD, RnfE and RnfG. FMN serves as cofactor.

Its subcellular location is the cell inner membrane. Part of a membrane-bound complex that couples electron transfer with translocation of ions across the membrane. This Shewanella sp. (strain W3-18-1) protein is Ion-translocating oxidoreductase complex subunit D.